The following is a 216-amino-acid chain: Endoplasmic reticulum vesicle protein 25 (216 aa).

An N-terminal signal peptide occupies residues 1–25; that stretch reads MGSSRLAMRSALGLFFLLFVQISLA. Over 26–185 the chain is Lumenal; sequence LKFDIAAGKG…TNESTNERVK (160 aa). Residues 36 to 126 enclose the GOLD domain; that stretch reads ERCIRNFVLK…HRSIELDVDI (91 aa). Residues 186 to 206 traverse the membrane as a helical segment; that stretch reads WFAFGTMGMLVGLGVWQVIYL. Over 207–216 the chain is Cytoplasmic; sequence RAYFRSKHLI.

Belongs to the EMP24/GP25L family.

Its subcellular location is the endoplasmic reticulum membrane. It is found in the golgi apparatus membrane. Functionally, constituent of COPII-coated endoplasmic reticulum-derived transport vesicles. Required for efficient transport of a subset of secretory proteins to the Golgi. Facilitates retrograde transport from the Golgi to the endoplasmic reticulum. The chain is Endoplasmic reticulum vesicle protein 25 (erv25) from Emericella nidulans (strain FGSC A4 / ATCC 38163 / CBS 112.46 / NRRL 194 / M139) (Aspergillus nidulans).